The sequence spans 367 residues: Peptide chain release factor 2 (367 aa).

Residue Q254 is modified to N5-methylglutamine.

This sequence belongs to the prokaryotic/mitochondrial release factor family. In terms of processing, methylated by PrmC. Methylation increases the termination efficiency of RF2.

The protein resides in the cytoplasm. In terms of biological role, peptide chain release factor 2 directs the termination of translation in response to the peptide chain termination codons UGA and UAA. The protein is Peptide chain release factor 2 of Bordetella avium (strain 197N).